The following is a 100-amino-acid chain: Urease subunit gamma (100 aa).

This sequence belongs to the urease gamma subunit family. As to quaternary structure, heterotrimer of UreA (gamma), UreB (beta) and UreC (alpha) subunits. Three heterotrimers associate to form the active enzyme.

The protein resides in the cytoplasm. The catalysed reaction is urea + 2 H2O + H(+) = hydrogencarbonate + 2 NH4(+). Its pathway is nitrogen metabolism; urea degradation; CO(2) and NH(3) from urea (urease route): step 1/1. In Pseudomonas entomophila (strain L48), this protein is Urease subunit gamma.